Here is a 488-residue protein sequence, read N- to C-terminus: Glutamyl-tRNA(Gln) amidotransferase subunit A (488 aa).

Active-site charge relay system residues include K77 and S152. The active-site Acyl-ester intermediate is the S176.

It belongs to the amidase family. GatA subfamily. Heterotrimer of A, B and C subunits.

It catalyses the reaction L-glutamyl-tRNA(Gln) + L-glutamine + ATP + H2O = L-glutaminyl-tRNA(Gln) + L-glutamate + ADP + phosphate + H(+). Functionally, allows the formation of correctly charged Gln-tRNA(Gln) through the transamidation of misacylated Glu-tRNA(Gln) in organisms which lack glutaminyl-tRNA synthetase. The reaction takes place in the presence of glutamine and ATP through an activated gamma-phospho-Glu-tRNA(Gln). This Streptococcus pyogenes serotype M6 (strain ATCC BAA-946 / MGAS10394) protein is Glutamyl-tRNA(Gln) amidotransferase subunit A.